The primary structure comprises 340 residues: Probable cyclic nucleotide phosphodiesterase PsycPRwf_0181 (340 aa).

The segment at Met-1–Asp-36 is disordered. The Fe cation site is built by Asp-47, His-49, Asp-128, Asn-158, His-237, His-276, and His-278. Residues His-49, Asp-128, and Asn-158 to His-159 contribute to the AMP site. His-278 contributes to the AMP binding site.

The protein belongs to the cyclic nucleotide phosphodiesterase class-III family. Requires Fe(2+) as cofactor.

The polypeptide is Probable cyclic nucleotide phosphodiesterase PsycPRwf_0181 (Psychrobacter sp. (strain PRwf-1)).